A 342-amino-acid chain; its full sequence is tRNA dimethylallyltransferase (342 aa).

A compositionally biased stretch (polar residues) spans 1-13 (MNDTTAKTLNCSP). The disordered stretch occupies residues 1–21 (MNDTTAKTLNCSPASRDGFPE). 40–47 (GPTGVGKT) contributes to the ATP binding site. 42-47 (TGVGKT) provides a ligand contact to substrate. 2 interaction with substrate tRNA regions span residues 65–68 (DSMQ) and 189–193 (QRILR).

This sequence belongs to the IPP transferase family. As to quaternary structure, monomer. It depends on Mg(2+) as a cofactor.

It carries out the reaction adenosine(37) in tRNA + dimethylallyl diphosphate = N(6)-dimethylallyladenosine(37) in tRNA + diphosphate. In terms of biological role, catalyzes the transfer of a dimethylallyl group onto the adenine at position 37 in tRNAs that read codons beginning with uridine, leading to the formation of N6-(dimethylallyl)adenosine (i(6)A). In Syntrophobacter fumaroxidans (strain DSM 10017 / MPOB), this protein is tRNA dimethylallyltransferase.